Reading from the N-terminus, the 1162-residue chain is Topoisomerase 1-associated factor 1 (1162 aa).

Disordered regions lie at residues T977 to A1017 and T1127 to Y1162. Residues Q993 to A1003 are compositionally biased toward basic residues.

Belongs to the timeless family. As to quaternary structure, component of the fork protection complex (FPC) consisting of TOF1 and CSM3.

It is found in the nucleus. In terms of biological role, forms a fork protection complex (FPC) with CSM3 and which is required for chromosome segregation during meiosis and DNA damage repair. FPC coordinates leading and lagging strand synthesis and moves with the replication fork. FPC stabilizes replication forks in a configuration that is recognized by replication checkpoint sensors. This Kluyveromyces lactis (strain ATCC 8585 / CBS 2359 / DSM 70799 / NBRC 1267 / NRRL Y-1140 / WM37) (Yeast) protein is Topoisomerase 1-associated factor 1 (TOF1).